Consider the following 121-residue polypeptide: Large ribosomal subunit protein bL19 (121 aa).

This sequence belongs to the bacterial ribosomal protein bL19 family.

In terms of biological role, this protein is located at the 30S-50S ribosomal subunit interface and may play a role in the structure and function of the aminoacyl-tRNA binding site. The chain is Large ribosomal subunit protein bL19 from Amoebophilus asiaticus (strain 5a2).